Here is a 490-residue protein sequence, read N- to C-terminus: Probable alcohol acetyltransferase FCK4 (490 aa).

It belongs to the alcohol acetyltransferase FCK4 family.

The protein operates within secondary metabolite biosynthesis. Probable alcohol acetyltransferase; part of the gene cluster that mediates the biosynthesis of cytokinins such as fusatin, fusatinic acids or 8-oxofusatin, known for their growth promoting and anti-senescence activities toward host plants. FCK1 is a bifunctional enzyme that performs the first steps in the biosynthesis of Fusarium cytokinins. It first condenses adenosine monophosphate (AMP) with dimethylallyl diphosphate (DMAPP) to yield isoprenyl adenosine monophosphate. It then catalyzes the removal of the phosphoribose to produce isopentenylaldehyde. The cytochrome P450 monooxygenase then converts isopentenylaldehyde to trans-zeatin. A condensation step converts trans-zeatin to fusatin which is further modified to produce fusatinic acid. The mechanism for oxidation of fusatin to fusatinic acid remains unknown. 8-oxofusatin could be produced through several pathways, via direct oxygenation of fusatin, or via the 8-oxo-pentenyladenine intermediate which itself must arise from either the prenylation of 8-oxo-AMP by FCK1 and/or oxygenation of isopentenylaldehyde. Both the FCK3 and FCK4 enzymes act downstream of the identified cytokinins to produce yet unidentified compounds. In Fusarium pseudograminearum (strain CS3096) (Wheat and barley crown-rot fungus), this protein is Probable alcohol acetyltransferase FCK4.